A 203-amino-acid polypeptide reads, in one-letter code: Twist-related protein 1 (203 aa).

The span at 1–18 shows a compositional bias: low complexity; it reads MMQDVSSSPVSPADDSLS. The interval 1-107 is disordered; sequence MMQDVSSSPV…GGSPQSCEEL (107 aa). The segment covering 34–43 has biased composition (basic residues); sequence RGGRKRRSSR. Composition is skewed to gly residues over residues 46 to 65 and 80 to 100; these read AGGGAGPGGAASGGAGGGDE and GCGGGGGGGAGGGGSSSGGGS. The 52-residue stretch at 109 to 160 folds into the bHLH domain; it reads TQRVMANVRERQRTQSLNEPFAALRKIIPTLPSDKLSKIQTLKLAARYIDFL. The tract at residues 162–192 is sufficient for transactivation activity; it reads RVLQSDELDSKTASCSYVAHEWLSYAFSVWR.

In terms of assembly, efficient DNA binding requires dimerization with another bHLH protein. Homodimer or heterodimer with E proteins such as TCF3. ID1 binds preferentially to TCF3 but does not interact efficiently with TWIST1 so ID1 levels control the amount of TCF3 available to dimerize with TWIST and thus determine the type of dimer formed.

Its subcellular location is the nucleus. Acts as a transcriptional regulator. Inhibits myogenesis by sequestrating E proteins, inhibiting trans-activation by MEF2, and inhibiting DNA-binding by MYOD1 through physical interaction. This interaction probably involves the basic domains of both proteins. Also represses expression of pro-inflammatory cytokines such as TNFA and IL1B. Regulates cranial suture patterning and fusion. Activates transcription as a heterodimer with E proteins. Regulates gene expression differentially, depending on dimer composition. Homodimers induce expression of FGFR2 and POSTN while heterodimers repress FGFR2 and POSTN expression and induce THBS1 expression. Heterodimerization is also required for osteoblast differentiation. Represses the activity of the circadian transcriptional activator: NPAS2-BMAL1 heterodimer. The polypeptide is Twist-related protein 1 (TWIST1) (Gorilla gorilla gorilla (Western lowland gorilla)).